Reading from the N-terminus, the 360-residue chain is Peptide chain release factor 1 (360 aa).

Residue Gln-235 is modified to N5-methylglutamine.

This sequence belongs to the prokaryotic/mitochondrial release factor family. Methylated by PrmC. Methylation increases the termination efficiency of RF1.

It localises to the cytoplasm. Functionally, peptide chain release factor 1 directs the termination of translation in response to the peptide chain termination codons UAG and UAA. The polypeptide is Peptide chain release factor 1 (Dechloromonas aromatica (strain RCB)).